A 498-amino-acid polypeptide reads, in one-letter code: MNNPKNDNYLSELSKVIWPIERYENKKFLPMAFMMFCILLNYSTLRSIKDGFVVTDIGAEAISFLKTYIVLPSAVIAMVIYVKLCDILKQENVFYVITSFFLGYFALFAFVLYPYPDLVHPDPETIESWSVAYPNVKWFIRIVGKWSFASFYTMAELWGTMMLSLLFWQFANQITKTDEAKRFYSMFGLLANLALPVTSVIIGYCLHEKTQIVAEHLKFVPLFVIMITSSFLVILTYRWMNKNVLTDPRLYDPALVKEKKAKAKMSLIDSFKMIFTSKYVGYIALLLIAYGVSVNLVEGVWKSKVKELYPTKEAYTIYMGKFQFYQGWVAIAFMLIGSNILRKVSWLTAAMITPLMMLITGAAFFAFIFFDSVIAMHLTGILASGPLALAVMIGMIQNVLSKGVKYSLFDATKNMAYIPLDKDLRVKGQAAVEVIGGRFGKSGGAIIQSTFFILFPAFGFVEATPYFASIFFVIVILWIYAVKGLNKEYKVLVNKTEK.

Over 1–33 the chain is Cytoplasmic; sequence MNNPKNDNYLSELSKVIWPIERYENKKFLPMAF. Residues 34–54 traverse the membrane as a helical segment; that stretch reads MMFCILLNYSTLRSIKDGFVV. A disulfide bridge connects residues Cys-37 and Cys-85. The Extracellular segment spans residues 55 to 67; it reads TDIGAEAISFLKT. The chain crosses the membrane as a helical span at residues 68-88; that stretch reads YIVLPSAVIAMVIYVKLCDIL. Topologically, residues 89-92 are cytoplasmic; sequence KQEN. Residues 93–113 traverse the membrane as a helical segment; it reads VFYVITSFFLGYFALFAFVLY. The Extracellular portion of the chain corresponds to 114–147; that stretch reads PYPDLVHPDPETIESWSVAYPNVKWFIRIVGKWS. Residues 148-168 form a helical membrane-spanning segment; that stretch reads FASFYTMAELWGTMMLSLLFW. Topologically, residues 169 to 184 are cytoplasmic; that stretch reads QFANQITKTDEAKRFY. A helical membrane pass occupies residues 185–205; it reads SMFGLLANLALPVTSVIIGYC. Residues 206–218 are Extracellular-facing; it reads LHEKTQIVAEHLK. The helical transmembrane segment at 219–239 threads the bilayer; sequence FVPLFVIMITSSFLVILTYRW. Topologically, residues 240-279 are cytoplasmic; the sequence is MNKNVLTDPRLYDPALVKEKKAKAKMSLIDSFKMIFTSKY. Residues 280 to 300 form a helical membrane-spanning segment; sequence VGYIALLLIAYGVSVNLVEGV. At 301–320 the chain is on the extracellular side; it reads WKSKVKELYPTKEAYTIYMG. A helical transmembrane segment spans residues 321–341; sequence KFQFYQGWVAIAFMLIGSNIL. Residues 342–348 are Cytoplasmic-facing; it reads RKVSWLT. Residues 349–369 form a helical membrane-spanning segment; the sequence is AAMITPLMMLITGAAFFAFIF. Topologically, residues 370–379 are extracellular; sequence FDSVIAMHLT. The helical transmembrane segment at 380 to 400 threads the bilayer; the sequence is GILASGPLALAVMIGMIQNVL. At 401–438 the chain is on the cytoplasmic side; it reads SKGVKYSLFDATKNMAYIPLDKDLRVKGQAAVEVIGGR. 436–442 contributes to the ATP binding site; that stretch reads GGRFGKS. A helical membrane pass occupies residues 439–459; sequence FGKSGGAIIQSTFFILFPAFG. Residues 460-465 are Extracellular-facing; the sequence is FVEATP. The helical transmembrane segment at 466–486 threads the bilayer; that stretch reads YFASIFFVIVILWIYAVKGLN. Over 487-498 the chain is Cytoplasmic; it reads KEYKVLVNKTEK.

This sequence belongs to the ADP/ATP translocase tlc family.

Its subcellular location is the cell membrane. Functionally, provides the rickettsial cell with host ATP in exchange for rickettsial ADP. This is an obligate exchange system. This energy acquiring activity is an important component of rickettsial parasitism. In Rickettsia conorii (strain ATCC VR-613 / Malish 7), this protein is ADP,ATP carrier protein 1 (tlcA).